Reading from the N-terminus, the 372-residue chain is Probable G-protein coupled receptor 45 (372 aa).

At 1–38 the chain is on the extracellular side; the sequence is MACNSTSLEAYTYLLLNTSNASDSGSTQLPAPLRISLA. N-linked (GlcNAc...) asparagine glycosylation is found at N4, N17, and N20. A helical transmembrane segment spans residues 39–59; that stretch reads IVMLLMTVVGFLGNTVVCIIV. The Cytoplasmic segment spans residues 60–75; sequence YQRPAMRSAINLLLAT. A helical transmembrane segment spans residues 76–96; sequence LAFSDIMLSLCCMPFTAVTLI. The Extracellular portion of the chain corresponds to 97 to 109; the sequence is TVRWHFGDHFCRL. A helical membrane pass occupies residues 110–130; sequence SATLYWFFVLEGVAILLIISV. The Cytoplasmic segment spans residues 131 to 149; that stretch reads DRFLIIVQRQDKLNPRRAK. A helical transmembrane segment spans residues 150–170; the sequence is VIIAVSWVLSFCIAGPSLTGW. The Extracellular segment spans residues 171-198; sequence TLVEVPARAPQCVLGYTELPADRAYVVT. A helical transmembrane segment spans residues 199 to 219; the sequence is LVVAVFFAPFGVMLCAYMCIL. The Cytoplasmic segment spans residues 220-268; it reads NTVRKNAVRVHNQSDSLDLRQLTRAGLRRLQRQQQVSVDLSFKTKAFTT. The helical transmembrane segment at 269–289 threads the bilayer; that stretch reads ILILFVGFSLCWLPHSVYSLL. The Extracellular portion of the chain corresponds to 290 to 305; sequence SVFSQRFYCGSSFYAT. The helical transmembrane segment at 306–326 threads the bilayer; that stretch reads STCVLWLSYLKSVFNPIVYCW. At 327–372 the chain is on the cytoplasmic side; sequence RIKKFREACIELLPQTFQILPKVPERIRRRIQPSTVYVCNENQSAV.

This sequence belongs to the G-protein coupled receptor 1 family. Expressed in brain; detected in the basal forebrain, frontal cortex, and caudate, but not in thalamus, hippocampus, or putamen.

Its subcellular location is the cell membrane. Its function is as follows. Orphan receptor. May play a role in brain function. The sequence is that of Probable G-protein coupled receptor 45 (GPR45) from Homo sapiens (Human).